The primary structure comprises 776 residues: V-set and immunoglobulin domain-containing protein 10-like 2 (776 aa).

A signal peptide spans 1–28 (MVGLSAHHRPLGCRLLILFCLLHPGASG). 5 consecutive Ig-like domains span residues 32–140 (PTSN…LYLM), 150–234 (PRVQ…AFLD), 242–324 (PVIT…TTVQ), 399–498 (PTLA…LRLE), and 500–592 (PQLT…VLLE). Cystine bridges form between Cys56–Cys122, Cys169–Cys217, Cys268–Cys308, Cys435–Cys480, and Cys521–Cys576. The 101-residue stretch at 608 to 708 (TPPNVTISRL…EVKTPVDPAF (101 aa)) folds into the Fibronectin type-III domain. 2 N-linked (GlcNAc...) asparagine glycosylation sites follow: Asn611 and Asn637. Residues 713–733 (AVLGAAGTGVVVALATSLLVF) traverse the membrane as a helical segment.

The protein resides in the membrane. This chain is V-set and immunoglobulin domain-containing protein 10-like 2, found in Mus musculus (Mouse).